The following is a 396-amino-acid chain: Cytochrome b (396 aa).

Transmembrane regions (helical) follow at residues 37-57 (FGSL…ILAM), 81-102 (WLMR…YAHI), 117-137 (WNVG…GYVL), and 182-202 (FFTF…IHIM). 2 residues coordinate heme b: His87 and His101. Heme b is bound by residues His186 and His200. His205 serves as a coordination point for a ubiquinone. A run of 4 helical transmembrane segments spans residues 230–250 (FKDI…SLLP), 292–312 (LGGV…PFTH), 324–344 (LAQV…WLGG), and 351–371 (FILM…LIFP).

This sequence belongs to the cytochrome b family. As to quaternary structure, the cytochrome bc1 complex contains 3 respiratory subunits (MT-CYB, CYC1 and UQCRFS1), 2 core proteins (UQCRC1 and UQCRC2) and probably 6 low-molecular weight proteins. Heme b is required as a cofactor.

The protein localises to the mitochondrion inner membrane. Its function is as follows. Component of the ubiquinol-cytochrome c reductase complex (complex III or cytochrome b-c1 complex) that is part of the mitochondrial respiratory chain. The b-c1 complex mediates electron transfer from ubiquinol to cytochrome c. Contributes to the generation of a proton gradient across the mitochondrial membrane that is then used for ATP synthesis. This Lampetra fluviatilis (European river lamprey) protein is Cytochrome b (mt-cyb).